The sequence spans 976 residues: MAELEHLGGKRAESARARRAEQLRRWRGSLTEQEPAERQGAGRQLQTRRGSPRVRFEDGAVFLAACSSGDTDEVKKLLARGADINTVNVDGLTALHQACIDENLDMVKFLVENRANVNQQDNEGWTPLHAAASCGYLNIAEYFISHGASVGIVNSEGEVPSDLAEEPAMKDLLLEQVKKQGVDLEQSRKEEEQQMLQDARQWLNSGRIEDVRQARSGATALHVAAAKGYSEVLRLLIQAGYELNVQDHDGWTPLHAAAHWGVKEACSILAEALCDMDIRNKLGQTPFDVADEGLVEHLEMLQKKQDVLRSEKETRNKLIESDLNSKFQSGLFKNKEKMLYEEEIPKSQDTEEENKESSSSSSEEEEGEDEVSESETEKEADKKPEATVNHSNSEIKSRIMEQIPAPAQNTFSASSARRLSSLFNKAEEPKDESPSSWRLGLRKTGSHNMLSEVANSREALRDRGSSIYRSSSSPRISALLDDKDKERENKSYFSMLVPRRLSSTSDIEEKENRESAVNLVRSGSHTRQLWRDEAKGSETPQTIAPSTYTSTYLKRTPYKSQADSTAEKTADSVSSSTPLCVITNRPAPSTANGVPAATVFSSAGTDPSVEAREKRRSYLTPVRDEEAESLRKARSRQARQTRRSTQGVTLTDLQEAEKTFSRSRAERQAQEQPGEKLEDPGGLEGSTKKQEPSAAPTKGAGEGRSLEEEPIYHRLRYPTQPDKPTTPVSPSASRPSLYTGSHLLRTSRASGPDSENSETSTHATAAKEMDTSEKGEADLDDQSSNRLSVRERRRAKDRRRGTGINFWTNDEDETDVSEEVKEALHERLSRLESGGTNPTSSDSYSDRASARARREAREARLASLTSRVEEDSNRDYKKLYESALTENQKLKTKLQEAQLELADIKAKLEKMAQQKQEKTSDRSSVLEVEKRERRALERKMSEMEEEMKVLTELKSDNQRLKDENGALIRVISKLSK.

A compositionally biased stretch (basic and acidic residues) spans Met1–Arg24. The tract at residues Met1–Pro52 is disordered. Residue Ser29 is modified to Phosphoserine. 5 ANK repeats span residues Glu57–Thr86, Asp90–Gln119, Glu123–Ile152, Ser216–Val245, and Asp249–Ile278. The segment at Glu342 to Asn489 is disordered. The span at Ser362–Ser374 shows a compositional bias: acidic residues. The segment covering Glu375 to Glu385 has biased composition (basic and acidic residues). Over residues Phe411–Phe423 the composition is skewed to low complexity. A Phosphothreonine modification is found at Thr444. Residues Ser465–Ser477 show a composition bias toward low complexity. The segment covering Leu480–Asn489 has biased composition (basic and acidic residues). Ser502 is subject to Phosphoserine. The interval Ser503–Asn873 is disordered. Residues Glu538–Ser564 are compositionally biased toward polar residues. Basic and acidic residues predominate over residues Val622 to Arg631. Over residues Lys632–Arg642 the composition is skewed to basic residues. Thr645 bears the Phosphothreonine mark. Residues Glu655–Asp679 show a composition bias toward basic and acidic residues. 2 stretches are compositionally biased toward polar residues: residues Asp722–Thr739 and Ser747–Ala763. Positions Ala765–Ala777 are enriched in basic and acidic residues. The segment covering Glu791 to Gly801 has biased composition (basic residues). Thr802 bears the Phosphothreonine mark. The span at Glu818 to Arg830 shows a compositional bias: basic and acidic residues. Ser833 carries the post-translational modification Phosphoserine. A compositionally biased stretch (basic and acidic residues) spans Tyr844–Arg860. At Ser941 the chain carries Phosphoserine.

As to quaternary structure, PP1 comprises a catalytic subunit, PPP1CA, PPP1CB or PPP1CC, and one or several targeting or regulatory subunits. PPP1R12B mediates binding to myosin. Isoform 3 and isoform 4 bind PPP1R12A, but not isoform 1 of PPP1R12B itself. Binds IL16.

The protein localises to the cytoplasm. Its subcellular location is the cytoskeleton. It is found in the stress fiber. In terms of biological role, regulates myosin phosphatase activity. Augments Ca(2+) sensitivity of the contractile apparatus. The protein is Protein phosphatase 1 regulatory subunit 12B (Ppp1r12b) of Mus musculus (Mouse).